The sequence spans 88 residues: MGTARFLRAVLLLSVLLMVTFPALLSAEHHDGRVDICRLPSDSGDCLRFFEMWYFDGTTCTKFVYGGYGGNDNRFPTEKACVKRCAKA.

The N-terminal stretch at 1–27 (MGTARFLRAVLLLSVLLMVTFPALLSA) is a signal peptide. A propeptide spanning residues 28–33 (EHHDGR) is cleaved from the precursor. Positions 37–85 (CRLPSDSGDCLRFFEMWYFDGTTCTKFVYGGYGGNDNRFPTEKACVKRC) constitute a BPTI/Kunitz inhibitor domain. 2 disulfide bridges follow: C37-C85 and C60-C81.

It belongs to the venom Kunitz-type family. 03 (sub-Kunitz) subfamily. As to expression, expressed by the venom gland.

The protein resides in the secreted. Serine protease inhibitor that inhibits trypsin at a molar ratio of 1:1. This is Kunitz-type U15-theraphotoxin-Hhn1b from Cyriopagopus hainanus (Chinese bird spider).